We begin with the raw amino-acid sequence, 392 residues long: Pannexin-3 (392 aa).

The Cytoplasmic segment spans residues 1–39 (MSLAHTAAEYMLSDALLPDRRGSRLKGLRLELPLDKMVK). Residues 40-60 (FITVGFPLLLMSLAFAQEFSS) traverse the membrane as a helical segment. Residues 61-113 (GSPISCFSPSNFSVRQAAYVDSSCWDSLAHHTQDKAGQYKVKSLWPHKALPYS) are Extracellular-facing. N-linked (GlcNAc...) asparagine glycosylation is present at Asn-71. A helical membrane pass occupies residues 114-134 (LLALAVAMYLPVLLWQYVAVP). Residues 135 to 215 (SLSSDLLFII…VATYLLRNAL (81 aa)) are Cytoplasmic-facing. The helical transmembrane segment at 216–236 (LLLFTSATYLYLGQFHLDVFF) threads the bilayer. The Extracellular segment spans residues 237-267 (QDEFNCFIKTGLLHDETHVPELITCRLTSLS). A helical membrane pass occupies residues 268-288 (VFQIVSVSSAAIYTILVPVII). Residues 289 to 392 (YNLTRLCRWD…LTQHTYDEHA (104 aa)) lie on the Cytoplasmic side of the membrane.

This sequence belongs to the pannexin family. In terms of assembly, homoheptameric. N-glycosylation may play a role in cell surface targeting. In terms of tissue distribution, expressed in skin, cartilage, heart, lung, liver, spleen, thymus and kidney. Not expressed in brain. Expressed in calvarial cells.

Its subcellular location is the cell membrane. The protein resides in the endoplasmic reticulum membrane. The enzyme catalyses Ca(2+)(in) = Ca(2+)(out). It carries out the reaction ATP(in) = ATP(out). Regulator of osteoblast differentiation by functionning as a Ca(2+) channel in the endoplasmic reticulum which regulates calmodulin (CaM) pathways. Allows ATP release into the extracellular space and activation or purinergic receptors. In Mus musculus (Mouse), this protein is Pannexin-3 (Panx3).